The primary structure comprises 376 residues: Succinate--CoA ligase [ADP-forming] subunit beta (376 aa).

In terms of domain architecture, ATP-grasp spans K9 to D237. ATP-binding positions include K46, G53–G55, V95, and E100. N192 and D206 together coordinate Mg(2+). Residues N257 and G314 to T316 contribute to the substrate site.

Belongs to the succinate/malate CoA ligase beta subunit family. Heterotetramer of two alpha and two beta subunits. Requires Mg(2+) as cofactor.

The catalysed reaction is succinate + ATP + CoA = succinyl-CoA + ADP + phosphate. It carries out the reaction GTP + succinate + CoA = succinyl-CoA + GDP + phosphate. It functions in the pathway carbohydrate metabolism; tricarboxylic acid cycle; succinate from succinyl-CoA (ligase route): step 1/1. Functionally, succinyl-CoA synthetase functions in the citric acid cycle (TCA), coupling the hydrolysis of succinyl-CoA to the synthesis of either ATP or GTP and thus represents the only step of substrate-level phosphorylation in the TCA. The beta subunit provides nucleotide specificity of the enzyme and binds the substrate succinate, while the binding sites for coenzyme A and phosphate are found in the alpha subunit. The protein is Succinate--CoA ligase [ADP-forming] subunit beta of Bacteroides thetaiotaomicron (strain ATCC 29148 / DSM 2079 / JCM 5827 / CCUG 10774 / NCTC 10582 / VPI-5482 / E50).